Here is a 389-residue protein sequence, read N- to C-terminus: Succinate--CoA ligase [ADP-forming] subunit beta (389 aa).

In terms of domain architecture, ATP-grasp spans 9–236 (RDLFEAHGVP…ERTEDPLEAK (228 aa)). ATP is bound by residues lysine 45, 52–54 (GRG), alanine 94, and glutamate 99. Mg(2+) is bound by residues asparagine 191 and aspartate 205. Residues asparagine 256 and 318-320 (GIT) contribute to the substrate site.

This sequence belongs to the succinate/malate CoA ligase beta subunit family. Heterotetramer of two alpha and two beta subunits. Requires Mg(2+) as cofactor.

The enzyme catalyses succinate + ATP + CoA = succinyl-CoA + ADP + phosphate. It carries out the reaction GTP + succinate + CoA = succinyl-CoA + GDP + phosphate. The protein operates within carbohydrate metabolism; tricarboxylic acid cycle; succinate from succinyl-CoA (ligase route): step 1/1. Functionally, succinyl-CoA synthetase functions in the citric acid cycle (TCA), coupling the hydrolysis of succinyl-CoA to the synthesis of either ATP or GTP and thus represents the only step of substrate-level phosphorylation in the TCA. The beta subunit provides nucleotide specificity of the enzyme and binds the substrate succinate, while the binding sites for coenzyme A and phosphate are found in the alpha subunit. The chain is Succinate--CoA ligase [ADP-forming] subunit beta from Micrococcus luteus (strain ATCC 4698 / DSM 20030 / JCM 1464 / CCM 169 / CCUG 5858 / IAM 1056 / NBRC 3333 / NCIMB 9278 / NCTC 2665 / VKM Ac-2230) (Micrococcus lysodeikticus).